Here is a 455-residue protein sequence, read N- to C-terminus: Bifunctional protein GlmU (455 aa).

The interval 1–228 is pyrophosphorylase; sequence MTQPLHVIIL…AQEAEGANDP (228 aa). UDP-N-acetyl-alpha-D-glucosamine-binding positions include 10–13, Lys24, Gln76, 81–82, 103–105, Gly138, Glu153, Asn168, and Asn226; these read LAAG, GT, and YGD. A Mg(2+)-binding site is contributed by Asp105. Asn226 contributes to the Mg(2+) binding site. Residues 229 to 249 form a linker region; it reads WQLSQLERAWQRRAVRALCAQ. Residues 250 to 455 are N-acetyltransferase; that stretch reads GARVRDPARL…DGWKRPLKKS (206 aa). UDP-N-acetyl-alpha-D-glucosamine contacts are provided by Arg332 and Lys350. His362 functions as the Proton acceptor in the catalytic mechanism. UDP-N-acetyl-alpha-D-glucosamine is bound by residues Tyr365 and Asn376. Acetyl-CoA is bound by residues Ala379, 385-386, Ser404, Ala422, and Arg439; that span reads NY.

This sequence in the N-terminal section; belongs to the N-acetylglucosamine-1-phosphate uridyltransferase family. It in the C-terminal section; belongs to the transferase hexapeptide repeat family. Homotrimer. It depends on Mg(2+) as a cofactor.

It is found in the cytoplasm. It catalyses the reaction alpha-D-glucosamine 1-phosphate + acetyl-CoA = N-acetyl-alpha-D-glucosamine 1-phosphate + CoA + H(+). The catalysed reaction is N-acetyl-alpha-D-glucosamine 1-phosphate + UTP + H(+) = UDP-N-acetyl-alpha-D-glucosamine + diphosphate. The protein operates within nucleotide-sugar biosynthesis; UDP-N-acetyl-alpha-D-glucosamine biosynthesis; N-acetyl-alpha-D-glucosamine 1-phosphate from alpha-D-glucosamine 6-phosphate (route II): step 2/2. Its pathway is nucleotide-sugar biosynthesis; UDP-N-acetyl-alpha-D-glucosamine biosynthesis; UDP-N-acetyl-alpha-D-glucosamine from N-acetyl-alpha-D-glucosamine 1-phosphate: step 1/1. It functions in the pathway bacterial outer membrane biogenesis; LPS lipid A biosynthesis. In terms of biological role, catalyzes the last two sequential reactions in the de novo biosynthetic pathway for UDP-N-acetylglucosamine (UDP-GlcNAc). The C-terminal domain catalyzes the transfer of acetyl group from acetyl coenzyme A to glucosamine-1-phosphate (GlcN-1-P) to produce N-acetylglucosamine-1-phosphate (GlcNAc-1-P), which is converted into UDP-GlcNAc by the transfer of uridine 5-monophosphate (from uridine 5-triphosphate), a reaction catalyzed by the N-terminal domain. This chain is Bifunctional protein GlmU, found in Stenotrophomonas maltophilia (strain R551-3).